The following is a 293-amino-acid chain: Nucleotide-binding protein BCG9842_B5683 (293 aa).

14 to 21 (GMSGAGKT) lines the ATP pocket. 65–68 (DLRG) is a GTP binding site.

Belongs to the RapZ-like family.

Its function is as follows. Displays ATPase and GTPase activities. In Bacillus cereus (strain G9842), this protein is Nucleotide-binding protein BCG9842_B5683.